A 367-amino-acid chain; its full sequence is Riboflavin biosynthesis protein VVA0006 (367 aa).

Residue 215–219 (RLHSE) participates in GTP binding. Zn(2+)-binding residues include Cys220, Cys231, and Cys233. GTP contacts are provided by residues Gln236, 258–260 (EGR), and Thr280. The active-site Proton acceptor is Asp292. The active-site Nucleophile is the Arg294. Residues Thr315 and Lys320 each coordinate GTP.

In the N-terminal section; belongs to the YbiA family. This sequence in the C-terminal section; belongs to the GTP cyclohydrolase II family. It depends on Zn(2+) as a cofactor.

The enzyme catalyses 2,5-diamino-6-hydroxy-4-(5-phosphoribosylamino)-pyrimidine + H2O = 2,5,6-triamino-4-hydroxypyrimidine + D-ribose 5-phosphate. It carries out the reaction 5-amino-6-(5-phospho-D-ribosylamino)uracil + H2O = 5,6-diaminouracil + D-ribose 5-phosphate. It catalyses the reaction GTP + 4 H2O = 2,5-diamino-6-hydroxy-4-(5-phosphoribosylamino)-pyrimidine + formate + 2 phosphate + 3 H(+). It functions in the pathway cofactor biosynthesis; riboflavin biosynthesis; 5-amino-6-(D-ribitylamino)uracil from GTP: step 1/4. In terms of biological role, catalyzes the hydrolysis of the N-glycosidic bond in the first two intermediates of riboflavin biosynthesis, which are highly reactive metabolites, yielding relatively innocuous products. Thus, can divert a surplus of harmful intermediates into relatively harmless products and pre-empt the damage these intermediates would otherwise do. Has no activity against GTP, nucleoside monophosphates or ADP-ribose. Functionally, catalyzes the conversion of GTP to 2,5-diamino-6-ribosylamino-4(3H)-pyrimidinone 5'-phosphate (DARP), formate and pyrophosphate. This chain is Riboflavin biosynthesis protein VVA0006, found in Vibrio vulnificus (strain YJ016).